Consider the following 253-residue polypeptide: Major prion protein (253 aa).

The signal sequence occupies residues 1 to 22; it reads MANLGCWMLVLFVATWSDLGLC. The interaction with GRB2, ERI3 and SYN1 stretch occupies residues 23–230; the sequence is KKRPKPGGWN…ESQAYYQRGS (208 aa). Residues 26-108 form a disordered region; that stretch reads PKPGGWNTGG…WHKPSKPKTS (83 aa). 5 consecutive repeat copies span residues 51–59, 60–67, 68–75, 76–83, and 84–91. Residues 51 to 91 form a 5 X 8 AA tandem repeats of P-H-G-G-G-W-G-Q region; that stretch reads PQGGGGWGQPHGGGWGQPHGGGWGQPHGGGWGQPHGGGWGQ. Residues 52-95 show a composition bias toward gly residues; sequence QGGGGWGQPHGGGWGQPHGGGWGQPHGGGWGQPHGGGWGQGGGT. Cu(2+) is bound by residues histidine 61, glycine 62, glycine 63, histidine 69, glycine 70, glycine 71, histidine 77, glycine 78, glycine 79, histidine 85, glycine 86, and glycine 87. Residues 98–108 are compositionally biased toward basic residues; sequence QWHKPSKPKTS. Cysteine 179 and cysteine 214 form a disulfide bridge. N-linked (GlcNAc...) asparagine glycosylation is found at asparagine 181 and asparagine 197. A lipid anchor (GPI-anchor amidated serine) is attached at serine 230. The propeptide at 231-253 is removed in mature form; the sequence is SMVLFSSPPVILLISFLIFLIVG.

It belongs to the prion family. In terms of assembly, monomer and homodimer. Has a tendency to aggregate into amyloid fibrils containing a cross-beta spine, formed by a steric zipper of superposed beta-strands. Soluble oligomers may represent an intermediate stage on the path to fibril formation. Copper binding may promote oligomerization. Interacts with GRB2, APP, ERI3/PRNPIP and SYN1. Mislocalized cytosolically exposed PrP interacts with MGRN1; this interaction alters MGRN1 subcellular location and causes lysosomal enlargement. Interacts with KIAA1191.

It is found in the cell membrane. It localises to the golgi apparatus. Its function is as follows. Its primary physiological function is unclear. Has cytoprotective activity against internal or environmental stresses. May play a role in neuronal development and synaptic plasticity. May be required for neuronal myelin sheath maintenance. May play a role in iron uptake and iron homeostasis. Soluble oligomers are toxic to cultured neuroblastoma cells and induce apoptosis (in vitro). Association with GPC1 (via its heparan sulfate chains) targets PRNP to lipid rafts. Also provides Cu(2+) or Zn(2+) for the ascorbate-mediated GPC1 deaminase degradation of its heparan sulfate side chains. This chain is Major prion protein (PRNP), found in Macaca fascicularis (Crab-eating macaque).